A 405-amino-acid polypeptide reads, in one-letter code: Accessory Sec system protein translocase subunit SecY2 (405 aa).

The next 10 helical transmembrane spans lie at 14–34, 63–83, 104–124, 131–151, 156–176, 191–211, 247–267, 285–305, 343–363, and 368–388; these read LFTL…LPFV, LSIF…WQMF, MYLT…RLPV, ILVV…LVWL, ASMG…LNIP, GIIV…ALMY, MYVM…GFIF, PLWV…FAFV, FSVI…LFVL, and LLRL…IFTI.

This sequence belongs to the SecY/SEC61-alpha family. SecY2 subfamily. Component of the accessory SecA2/SecY2 protein translocase complex required to export cell wall proteins. May form heterotrimers with SecE and SecG subunits.

It is found in the cell membrane. Functionally, part of the accessory SecA2/SecY2 system specifically required for export of possible cell wall proteins. The central subunit of a protein translocation channel. This is Accessory Sec system protein translocase subunit SecY2 from Streptococcus pneumoniae (strain CGSP14).